The primary structure comprises 404 residues: CD209 antigen (404 aa).

The Cytoplasmic portion of the chain corresponds to 1 to 37; sequence MSDSKEPRLQQLDLLEEEQLGGVGFRQTRGYKSLAGC. 3 short sequence motifs (endocytosis signal) span residues 14 to 15, 16 to 18, and 31 to 34; these read LL, EEE, and YKSL. A helical; Signal-anchor for type II membrane protein transmembrane segment spans residues 38 to 58; it reads LGHGPLVLQLLSFTLLAGLLV. The Extracellular segment spans residues 59 to 404; sequence QVSKVPSSLS…APTTPNPPPA (346 aa). N80 carries an N-linked (GlcNAc...) asparagine glycan. 7 repeat units span residues 96-118, 119-141, 142-164, 165-187, 188-210, 211-233, and 234-257. The 7 X approximate tandem repeats stretch occupies residues 96–257; it reads KQQEIYQELT…AVERLCHPCP (162 aa). 3 disulfide bridges follow: C256–C267, C284–C377, and C356–C369. Positions 263–378 constitute a C-type lectin domain; it reads FQGNCYFMSN…CNLAKFWICK (116 aa). E347, N349, I351, E354, N365, and D366 together coordinate Ca(2+). The tract at residues 382 to 404 is disordered; that stretch reads ASCSGDEERLLSPAPTTPNPPPA.

Homotetramer. Interacts with C1QBP; the interaction is indicative for a C1q:C1QBP:CD209 signaling complex. Interacts with ICAM2 and ICAM3 by binding to mannose-like carbohydrates. Interacts (via C-type lectin domain) with CEACAM1 (via Lewis X moieties); this interaction is regulated by the glycosylation pattern of CEACAM1 on cell types and regulates contact between dendritic cells and neutrophils.

Its subcellular location is the membrane. Its function is as follows. Pathogen-recognition receptor expressed on the surface of immature dendritic cells (DCs) and involved in initiation of primary immune response. Thought to mediate the endocytosis of pathogens which are subsequently degraded in lysosomal compartments. The receptor returns to the cell membrane surface and the pathogen-derived antigens are presented to resting T-cells via MHC class II proteins to initiate the adaptive immune response. Probably recognizes in a calcium-dependent manner high mannose N-linked oligosaccharides in a variety of pathogen antigens. On DCs it is a high affinity receptor for ICAM2 and ICAM3 by binding to mannose-like carbohydrates. May act as a DC rolling receptor that mediates transendothelial migration of DC presursors from blood to tissues by binding endothelial ICAM2. Seems to regulate DC-induced T-cell proliferation by binding to ICAM3 on T-cells in the immunological synapse formed between DC and T-cells. In Macaca mulatta (Rhesus macaque), this protein is CD209 antigen (CD209).